A 1381-amino-acid chain; its full sequence is Hepatocyte growth factor receptor (1381 aa).

Positions 1-24 (MKAPAVLAPGILVLLFTLVQRSNG) are cleaved as a signal peptide. At 25–932 (ECKEALAKSE…VIVQPDQNFT (908 aa)) the chain is on the extracellular side. Residues 27-515 (KEALAKSEMN…TGKKITKIPL (489 aa)) form the Sema domain. N-linked (GlcNAc...) asparagine glycosylation occurs at Asn45. 4 disulfide bridges follow: Cys95–Cys101, Cys98–Cys160, Cys133–Cys141, and Cys172–Cys175. The N-linked (GlcNAc...) asparagine glycan is linked to Asn106. Asn149 is a glycosylation site (N-linked (GlcNAc...) asparagine). Residue Asn202 is glycosylated (N-linked (GlcNAc...) asparagine). 2 disulfide bridges follow: Cys298–Cys363 and Cys385–Cys397. N-linked (GlcNAc...) asparagine glycans are attached at residues Asn399 and Asn405. Cystine bridges form between Cys520–Cys538, Cys526–Cys561, Cys529–Cys545, and Cys541–Cys551. IPT/TIG domains follow at residues 563–655 (PAIY…FSYV), 657–739 (PIIT…FSYR), and 742–836 (PIVY…LIYV). Residue Thr582 is glycosylated (O-linked (Man) threonine). N-linked (GlcNAc...) asparagine glycosylation is found at Asn607 and Asn635. Residues Thr676 and Thr761 are each glycosylated (O-linked (Man) threonine). Residues Asn785, Asn879, and Asn930 are each glycosylated (N-linked (GlcNAc...) asparagine). Residues 933 to 955 (GLIAGVVSISIALLLLLGLFLWL) traverse the membrane as a helical segment. Residues 956 to 1381 (KKRKQIKDLG…EDNADDEVDT (426 aa)) lie on the Cytoplasmic side of the membrane. Ser966 is subject to Phosphoserine. Phosphothreonine is present on Thr977. A phosphoserine mark is found at Ser990, Ser997, and Ser1000. Tyr1003 is subject to Phosphotyrosine. Positions 1078–1345 (VHFNEVIGRG…RISAIFSTFI (268 aa)) constitute a Protein kinase domain. ATP is bound by residues 1084-1092 (IGRGHFGCV) and Lys1110. The active-site Proton acceptor is Asp1204. Positions 1212–1381 (LDEKFTVKVA…EDNADDEVDT (170 aa)) are interaction with RANBP9. At Tyr1230 the chain carries Phosphotyrosine. 2 positions are modified to phosphotyrosine; by autocatalysis: Tyr1234 and Tyr1235. Thr1289 bears the Phosphothreonine mark. The segment at 1320–1359 (WHPKAEMRPSFSELVSRISAIFSTFIGEHYVHVNATYVNV) is interaction with MUC20. A phosphotyrosine; by autocatalysis mark is found at Tyr1349 and Tyr1356. A Phosphotyrosine modification is found at Tyr1365.

It belongs to the protein kinase superfamily. Tyr protein kinase family. Heterodimer made of an alpha chain (50 kDa) and a beta chain (145 kDa) which are disulfide linked. Binds PLXNB1. Interacts when phosphorylated with downstream effectors including STAT3, PIK3R1, SRC, PCLG1, GRB2 and GAB1. Interacts with SPSB1, SPSB2 and SPSB4. Interacts with INPP5D/SHIP1. When phosphorylated at Tyr-1356, interacts with INPPL1/SHIP2. Interacts with RANBP9 and RANBP10, as well as SPSB1, SPSB2, SPSB3 and SPSB4. SPSB1 binding occurs in the presence and in the absence of HGF, however HGF treatment has a positive effect on this interaction. Interacts with MUC20; prevents interaction with GRB2 and suppresses hepatocyte growth factor-induced cell proliferation. Interacts with GRB10. Interacts with PTPN1 and PTPN2. Interacts with HSP90AA1 and HSP90AB1; the interaction suppresses MET kinase activity. Interacts with tensin TNS3. Interacts (when phosphorylated) with tensin TNS4 (via SH2 domain); the interaction increases MET protein stability by inhibiting MET endocytosis and subsequent lysosomal degradation. Autophosphorylated in response to ligand binding on Tyr-1234 and Tyr-1235 in the kinase domain leading to further phosphorylation of Tyr-1349 and Tyr-1356 in the C-terminal multifunctional docking site. Dephosphorylated by PTPRJ at Tyr-1349 and Tyr-1365. Dephosphorylated by PTPN1 and PTPN2. In terms of processing, ubiquitinated. Ubiquitination by CBL regulates the receptor stability and activity through proteasomal degradation. Post-translationally, O-mannosylation of IPT/TIG domains by TMEM260 is required for protein maturation. O-mannosylated residues are composed of single mannose glycans that are not elongated or modified.

Its subcellular location is the membrane. It carries out the reaction L-tyrosyl-[protein] + ATP = O-phospho-L-tyrosyl-[protein] + ADP + H(+). In its inactive state, the C-terminal tail interacts with the catalytic domain and inhibits the kinase activity. Upon ligand binding, the C-terminal tail is displaced and becomes phosphorylated, thus increasing the kinase activity. Its function is as follows. Receptor tyrosine kinase that transduces signals from the extracellular matrix into the cytoplasm by binding to hepatocyte growth factor/HGF ligand. Regulates many physiological processes including proliferation, scattering, morphogenesis and survival. Ligand binding at the cell surface induces autophosphorylation of MET on its intracellular domain that provides docking sites for downstream signaling molecules. Following activation by ligand, interacts with the PI3-kinase subunit PIK3R1, PLCG1, SRC, GRB2, STAT3 or the adapter GAB1. Recruitment of these downstream effectors by MET leads to the activation of several signaling cascades including the RAS-ERK, PI3 kinase-AKT, or PLCgamma-PKC. The RAS-ERK activation is associated with the morphogenetic effects while PI3K/AKT coordinates prosurvival effects. During embryonic development, MET signaling plays a role in gastrulation, development and migration of muscles and neuronal precursors, angiogenesis and kidney formation. In adults, participates in wound healing as well as organ regeneration and tissue remodeling. Also promotes differentiation and proliferation of hematopoietic cells. In Colobus guereza (Mantled guereza), this protein is Hepatocyte growth factor receptor (MET).